Reading from the N-terminus, the 315-residue chain is MPKKEIIILCGPTASGKSYLGHALAKACDGEIINIDSMQVYKEIPIITASPPESYKSEIPYHLYNFLPITEDFSVVKYLKLAAEKINQVTASGKLPILIGGTGLYINSLVFGYNNIPDISEDLRQQVRKLHNEIGNTELHNRLTKLDPLASSKINQSDTQRLIRAYEVVLQTGKSIFSFQTLPKEQILSEFNFKIIFLNPERKFLYKICDERLANIFKDGAIDEIALIKKQFNPDYLNLKAVGIKEILAYLENKLTLSEALNLAQTRTRRYAKRQITWFKHQIKEKITLDYSNEEDFLQVTRKLSILIDLPNSNK.

11 to 18 is an ATP binding site; it reads GPTASGKS. 13–18 provides a ligand contact to substrate; that stretch reads TASGKS. 2 interaction with substrate tRNA regions span residues 36–39 and 160–164; these read DSMQ and QRLIR.

The protein belongs to the IPP transferase family. Monomer. Mg(2+) serves as cofactor.

The enzyme catalyses adenosine(37) in tRNA + dimethylallyl diphosphate = N(6)-dimethylallyladenosine(37) in tRNA + diphosphate. Its function is as follows. Catalyzes the transfer of a dimethylallyl group onto the adenine at position 37 in tRNAs that read codons beginning with uridine, leading to the formation of N6-(dimethylallyl)adenosine (i(6)A). This Rickettsia bellii (strain RML369-C) protein is tRNA dimethylallyltransferase.